Consider the following 844-residue polypeptide: Striatin-interacting proteins 2 (844 aa).

Low complexity predominate over residues 1 to 18 (MDDPAAPGPAGSPANDNG). The tract at residues 1–58 (MDDPAAPGPAGSPANDNGNGNGNGNGNGNGGKGKPAVPKGRETFRNQRRESEGSVDCP) is disordered. Gly residues predominate over residues 19-33 (NGNGNGNGNGNGGKG). Residues 39 to 52 (KGRETFRNQRRESE) show a composition bias toward basic and acidic residues. Phosphoserine is present on residues Ser328, Ser339, and Ser364. A disordered region spans residues 331–355 (SYTLDLGESQLAPPPSKLRGRRGSR). Residues 370 to 422 (ERDLFKTEEPATEEEEESAADGERTLDGELDLLEQDPLVPPPPSQTPLSTDRV) are disordered. A compositionally biased stretch (acidic residues) spans 379–389 (PATEEEEESAA).

It belongs to the STRIP family. As to quaternary structure, part of the core of STRIPAK complexes composed of PP2A catalytic and scaffolding subunits, the striatins (PP2A regulatory subunits), the striatin-associated proteins MOB4, STRIP1 and STRIP2, PDCD10 and members of the STE20 kinases, such as STK24 and STK26. Interacts with CTTNBP2NL.

It localises to the cytoplasm. In terms of biological role, plays a role in the regulation of cell morphology and cytoskeletal organization. Required in the control of cell shape. Calmodulin-binding scaffolding protein which is the center of the striatin-interacting phosphatase and kinase (STRIPAK) complexes. STRIPAK complexes have critical roles in protein (de)phosphorylation and are regulators of multiple signaling pathways including Hippo, MAPK, nuclear receptor and cytoskeleton remodeling. Different types of STRIPAK complexes are involved in a variety of biological processes such as cell growth, differentiation, apoptosis, metabolism and immune regulation. This is Striatin-interacting proteins 2 (Strip2) from Mus musculus (Mouse).